Reading from the N-terminus, the 125-residue chain is Small ribosomal subunit protein uS13 (125 aa).

It belongs to the universal ribosomal protein uS13 family. As to quaternary structure, part of the 30S ribosomal subunit. Forms a loose heterodimer with protein S19. Forms two bridges to the 50S subunit in the 70S ribosome.

In terms of biological role, located at the top of the head of the 30S subunit, it contacts several helices of the 16S rRNA. In the 70S ribosome it contacts the 23S rRNA (bridge B1a) and protein L5 of the 50S subunit (bridge B1b), connecting the 2 subunits; these bridges are implicated in subunit movement. Contacts the tRNAs in the A and P-sites. This is Small ribosomal subunit protein uS13 from Orientia tsutsugamushi (strain Boryong) (Rickettsia tsutsugamushi).